The sequence spans 170 residues: NADH-quinone oxidoreductase subunit B (170 aa).

Residues C46, C47, C111, and C141 each coordinate [4Fe-4S] cluster.

The protein belongs to the complex I 20 kDa subunit family. NDH-1 is composed of 14 different subunits. Subunits NuoB, C, D, E, F, and G constitute the peripheral sector of the complex. It depends on [4Fe-4S] cluster as a cofactor.

It is found in the cell membrane. It carries out the reaction a quinone + NADH + 5 H(+)(in) = a quinol + NAD(+) + 4 H(+)(out). In terms of biological role, NDH-1 shuttles electrons from NADH, via FMN and iron-sulfur (Fe-S) centers, to quinones in the respiratory chain. The immediate electron acceptor for the enzyme in this species is believed to be a menaquinone. Couples the redox reaction to proton translocation (for every two electrons transferred, four hydrogen ions are translocated across the cytoplasmic membrane), and thus conserves the redox energy in a proton gradient. The sequence is that of NADH-quinone oxidoreductase subunit B from Geobacillus thermodenitrificans (strain NG80-2).